The chain runs to 61 residues: Large ribosomal subunit protein eL29 (61 aa).

A compositionally biased stretch (basic residues) spans 1–26 (MAKSKNHTNHNQNKKAHRNGIKRPQK). The segment at 1 to 32 (MAKSKNHTNHNQNKKAHRNGIKRPQKHRYDSL) is disordered.

Belongs to the eukaryotic ribosomal protein eL29 family. In terms of assembly, component of the large ribosomal subunit (LSU). Mature yeast ribosomes consist of a small (40S) and a large (60S) subunit. The 40S small subunit contains 1 molecule of ribosomal RNA (18S rRNA) and at least 33 different proteins. The large 60S subunit contains 3 rRNA molecules (25S, 5.8S and 5S rRNA) and at least 46 different proteins.

It localises to the cytoplasm. The protein localises to the nucleus. Its subcellular location is the nucleolus. Its function is as follows. Component of the ribosome, a large ribonucleoprotein complex responsible for the synthesis of proteins in the cell. The small ribosomal subunit (SSU) binds messenger RNAs (mRNAs) and translates the encoded message by selecting cognate aminoacyl-transfer RNA (tRNA) molecules. The large subunit (LSU) contains the ribosomal catalytic site termed the peptidyl transferase center (PTC), which catalyzes the formation of peptide bonds, thereby polymerizing the amino acids delivered by tRNAs into a polypeptide chain. The nascent polypeptides leave the ribosome through a tunnel in the LSU and interact with protein factors that function in enzymatic processing, targeting, and the membrane insertion of nascent chains at the exit of the ribosomal tunnel. The sequence is that of Large ribosomal subunit protein eL29 (rpl29) from Schizosaccharomyces pombe (strain 972 / ATCC 24843) (Fission yeast).